We begin with the raw amino-acid sequence, 427 residues long: Acyl-lipid 8-desaturase (427 aa).

The tract at residues 1–24 (MGRGGDSSGQAHPAAELAVPSDRA) is disordered. The Cytochrome b5 heme-binding domain maps to 36–84 (IVLYGKRVDVTKFQRTHPGGSKVFRIFQDRDATEQFESYHSKRAIKMME). Residues His52 and His75 each contribute to the heme site. The Histidine box-1 signature appears at 178–182 (HSVFK). The helical transmembrane segment at 189–209 (VGWNNAAGYFLGFVQGYAVEW) threads the bilayer. Residues 213–218 (RHNTHH) carry the Histidine box-2 motif. A run of 2 helical transmembrane segments spans residues 261 to 281 (VPVM…YVAM) and 286 to 306 (MLPQ…VFAG). A Histidine box-3 motif is present at residues 373 to 377 (QTEHH).

This sequence belongs to the fatty acid desaturase type 1 family. Fe(2+) serves as cofactor.

It is found in the membrane. Functionally, fatty acid desaturase that introduces a cis double bond at the 8-position in 20-carbon polyunsaturated fatty acids incorporated in a glycerolipid that contain a Delta(8) double bond to yield (20:4(8,11,14,17)). The sequence is that of Acyl-lipid 8-desaturase from Rebecca salina (Marine microalga).